Reading from the N-terminus, the 966-residue chain is Mitogen-activated protein kinase kinase kinase 13 (966 aa).

Disordered stretches follow at residues 1–22, 30–49, and 90–114; these read MANF…SESK, ELTA…QQEK, and HDES…SGTE. A compositionally biased stretch (polar residues) spans 95-113; the sequence is TAVSQGNSNTVDGESTSGT. In terms of domain architecture, Protein kinase spans 168–409; it reads ISELQWLGSG…FRQTLMHLDI (242 aa). Residues 174 to 182 and Lys195 each bind ATP; that span reads LGSGAQGAV. The active-site Proton acceptor is Asp279. 2 leucine-zipper regions span residues 433–454 and 486–507; these read VKKH…DEEL and LSAI…EQAV. Disordered stretches follow at residues 534–599, 611–655, 744–834, and 846–908; these read KRKG…RGSH, AQEN…HHPR, DIPS…RRQR, and STFS…GLSD. The segment covering 567–581 has biased composition (low complexity); the sequence is SPLSGSPKMSTSSSK. Basic residues predominate over residues 582–594; sequence SRYRSKPRHRRGN. 2 stretches are compositionally biased toward polar residues: residues 611 to 629 and 785 to 795; these read AQEN…SQYP and RSESSLGTSHL. Residues 814 to 827 are compositionally biased toward acidic residues; the sequence is DSSEEEEGEVDSEV. Residues 815-828 form an acidic region; it reads SSEEEEGEVDSEVE. Polar residues predominate over residues 846 to 855; it reads STFSSENFSV. Positions 873-887 are enriched in basic and acidic residues; it reads LADKLEDRLAEKLDD.

Belongs to the protein kinase superfamily. STE Ser/Thr protein kinase family. MAP kinase kinase kinase subfamily. As to quaternary structure, homodimer; forms dimers through the leucine-zipper motif. Interacts with the C-terminus of MAPK8IP1 through the kinase catalytic domain. Binds PRDX3. Associates with the IKK complex through the kinase domain. It depends on Mg(2+) as a cofactor. Post-translationally, autophosphorylated on serine and threonine residues. In terms of tissue distribution, expressed in the adult brain, liver, placenta and pancreas, with expression strongest in the pancreas.

The protein resides in the cytoplasm. It localises to the membrane. The enzyme catalyses L-seryl-[protein] + ATP = O-phospho-L-seryl-[protein] + ADP + H(+). It carries out the reaction L-threonyl-[protein] + ATP = O-phospho-L-threonyl-[protein] + ADP + H(+). With respect to regulation, activated by autophosphorylation and homodimerization. In terms of biological role, activates the JUN N-terminal pathway through activation of the MAP kinase kinase MAP2K7. Acts synergistically with PRDX3 to regulate the activation of NF-kappa-B in the cytosol. This activation is kinase-dependent and involves activating the IKK complex, the IKBKB-containing complex that phosphorylates inhibitors of NF-kappa-B. The protein is Mitogen-activated protein kinase kinase kinase 13 of Homo sapiens (Human).